A 356-amino-acid chain; its full sequence is MKKSDFHYDLPEELIAQAPLAERAASRLLVVPPTPAAFSDRQVRDLPELLQPGDLLIFNDTRVIPARLFGQKASGGRVEILIERLLGGQQARAQIGASKSPKAGSVIALDAGGQAEVLGRDGEFYLLRFDIPAPLEHWLLDAGRLPLPPYIRREPGLDDRERYQTVFAREVGAVAAPTAGLHFDEALLARLRERGVEFGHVTLHVGAGTFQPVRVDALDKHVMHTEWLNVGAALVEQVRRTRARGGRVIAVGTTVVRSLESAWRKTDDAPHGELQPFAGETQIFILPGYRIRSVDAMVTNFHLPESTLLMMVSAFAGCDRIFAAYAHAIAQRYRFFSYGDAMLLWSREWGIGNGES.

Belongs to the QueA family. In terms of assembly, monomer.

The protein localises to the cytoplasm. The catalysed reaction is 7-aminomethyl-7-carbaguanosine(34) in tRNA + S-adenosyl-L-methionine = epoxyqueuosine(34) in tRNA + adenine + L-methionine + 2 H(+). Its pathway is tRNA modification; tRNA-queuosine biosynthesis. Functionally, transfers and isomerizes the ribose moiety from AdoMet to the 7-aminomethyl group of 7-deazaguanine (preQ1-tRNA) to give epoxyqueuosine (oQ-tRNA). This Xanthomonas campestris pv. campestris (strain B100) protein is S-adenosylmethionine:tRNA ribosyltransferase-isomerase.